The sequence spans 687 residues: TWiK family of potassium channels protein 12 (687 aa).

Residues 1-21 (MTLFQKLQWFCQLIRLRAYYK) lie on the Cytoplasmic side of the membrane. The helical transmembrane segment at 22–42 (FLLLIAYTLFGAWLFRFYELQ) threads the bilayer. 3 N-linked (GlcNAc...) asparagine glycosylation sites follow: Asn-53, Asn-77, and Asn-98. Positions 112–132 (WTWTGAMFYAGQLYTTIGYGY) form an intramembrane region, pore-forming. Residues 142–162 (ICTVLYALFGIPCFLMYLKAI) traverse the membrane as a helical segment. Topologically, residues 163-212 (GKTLSKRLKKIYKRVRRSAFGKFLLPTRVTATKDGFEDPDASAEERKRKP) are cytoplasmic. A helical membrane pass occupies residues 213–233 (FPIPIAIILLIIWICFSASMF). The pore-forming intramembrane region spans 242-262 (FPSAVYFFIVSISTVGLGDML). Residues 270–290 (VFNFLLILFGLALLSMCFELI) traverse the membrane as a helical segment. At 291–687 (TDRIAKWKQK…SKRDAPVNIV (397 aa)) the chain is on the cytoplasmic side. The interval 661–687 (SPSTSTSTSMIDSGYDLSKRDAPVNIV) is disordered. Over residues 677–687 (LSKRDAPVNIV) the composition is skewed to basic and acidic residues.

This sequence belongs to the two pore domain potassium channel (TC 1.A.1.8) family.

It localises to the membrane. The sequence is that of TWiK family of potassium channels protein 12 from Caenorhabditis briggsae.